We begin with the raw amino-acid sequence, 697 residues long: Putative cryptochrome DASH (697 aa).

The 160-residue stretch at 5-164 folds into the Photolyase/cryptochrome alpha/beta domain; that stretch reads KLLVYLLRRD…GFKLWHDEKY (160 aa). Disordered stretches follow at residues 170–215 and 554–697; these read DNGL…FPSW and FSVT…PPHI. A compositionally biased stretch (basic and acidic residues) spans 188-198; the sequence is KTQEPLRERPR. Positions 560–569 are enriched in basic residues; it reads RGNRRPYRWR. Positions 578 to 590 are enriched in gly residues; the sequence is GRGGRGGGTGNTS. Composition is skewed to low complexity over residues 659–675 and 683–697; these read QQQQ…YAHQ and RQQQ…PPHI.

The protein belongs to the DNA photolyase class-1 family. Requires FAD as cofactor. (6R)-5,10-methylene-5,6,7,8-tetrahydrofolate serves as cofactor.

Functionally, may have a photoreceptor function. The polypeptide is Putative cryptochrome DASH (Gibberella zeae (strain ATCC MYA-4620 / CBS 123657 / FGSC 9075 / NRRL 31084 / PH-1) (Wheat head blight fungus)).